The following is a 215-amino-acid chain: 3-isopropylmalate dehydratase small subunit (215 aa).

Belongs to the LeuD family. LeuD type 1 subfamily. As to quaternary structure, heterodimer of LeuC and LeuD.

It carries out the reaction (2R,3S)-3-isopropylmalate = (2S)-2-isopropylmalate. It participates in amino-acid biosynthesis; L-leucine biosynthesis; L-leucine from 3-methyl-2-oxobutanoate: step 2/4. In terms of biological role, catalyzes the isomerization between 2-isopropylmalate and 3-isopropylmalate, via the formation of 2-isopropylmaleate. The protein is 3-isopropylmalate dehydratase small subunit of Teredinibacter turnerae (strain ATCC 39867 / T7901).